The sequence spans 116 residues: Large ribosomal subunit protein bL20 (116 aa).

The protein belongs to the bacterial ribosomal protein bL20 family.

Functionally, binds directly to 23S ribosomal RNA and is necessary for the in vitro assembly process of the 50S ribosomal subunit. It is not involved in the protein synthesizing functions of that subunit. This Helicobacter pylori (strain HPAG1) protein is Large ribosomal subunit protein bL20.